Reading from the N-terminus, the 215-residue chain is Sodium channel regulatory subunit beta-3 (215 aa).

Positions methionine 1–proline 24 are cleaved as a signal peptide. The Ig-like C2-type domain maps to valine 25–threonine 138. At valine 25–valine 156 the chain is on the extracellular side. 2 disulfides stabilise this stretch: cysteine 26/cysteine 48 and cysteine 45/cysteine 120. 4 N-linked (GlcNAc...) asparagine glycosylation sites follow: asparagine 95, asparagine 109, asparagine 113, and asparagine 121. Residues valine 157–isoleucine 178 form a helical membrane-spanning segment. Over tyrosine 179 to glutamate 215 the chain is Cytoplasmic.

This sequence belongs to the sodium channel auxiliary subunit SCN3B (TC 8.A.17) family. As to quaternary structure, a voltage-gated sodium (Nav) channel consists of an ion-conducting pore-forming alpha subunit functional on its own that is regulated by one or more beta subunits. Forms homodimers and homotrimers. SCN3B is non-covalently associated with alpha subunits and induces the formation of alpha subunit oligomers, including trimers. Interacts with SCN5A/Nav1.5; regulatory subunit of SCN5A/Nav1.5. Interacts with SCN7A/Nav2.1; probable regulatory subunit of SCN7A/Nav2.1. Interacts with SCN10A; regulatory subunit of SCN10A/Nav1.8. Interacts with NFASC; probably involved in targeting the sodium channels to the nodes of Ranvier. In terms of processing, intramolecular disulfide bonds favor the voltage-gated sodium channel oligomeric complex assembly. N-glycosylated.

The protein localises to the cell membrane. Its function is as follows. Regulatory subunit of multiple voltage-gated sodium (Nav) channels directly mediating the depolarization of excitable membranes. Navs, also called VGSCs (voltage-gated sodium channels) or VDSCs (voltage-dependent sodium channels), operate by switching between closed and open conformations depending on the voltage difference across the membrane. In the open conformation they allow Na(+) ions to selectively pass through the pore, along their electrochemical gradient. The influx of Na+ ions provokes membrane depolarization, initiating the propagation of electrical signals throughout cells and tissues. The accessory beta subunits participate in localization and functional modulation of the Nav channels. Modulates the activity of SCN2A/Nav1.2, causing a hyperpolarizing shift in the voltage-dependence of inactivation of the channel and increasing the fraction of channels operating in the fast gating mode. Modulates the activity of SCN5A/Nav1.5. Could also regulate the atypical sodium channel SCN7A/Nav2.1. Modulates the activity of SCN10A/Nav1.8, regulating its oligomerization and accelerating the recovery from inactivation. This chain is Sodium channel regulatory subunit beta-3, found in Mus musculus (Mouse).